The chain runs to 507 residues: ATP synthase subunit alpha, mitochondrial (507 aa).

171–178 (GDRQTGKT) is an ATP binding site.

The protein belongs to the ATPase alpha/beta chains family. In terms of assembly, F-type ATPases have 2 components, CF(1) - the catalytic core - and CF(0) - the membrane proton channel. CF(1) has five subunits: alpha(3), beta(3), gamma(1), delta(1), epsilon(1). CF(0) has three main subunits: a, b and c.

Its subcellular location is the mitochondrion. The protein resides in the mitochondrion inner membrane. Mitochondrial membrane ATP synthase (F(1)F(0) ATP synthase or Complex V) produces ATP from ADP in the presence of a proton gradient across the membrane which is generated by electron transport complexes of the respiratory chain. F-type ATPases consist of two structural domains, F(1) - containing the extramembraneous catalytic core, and F(0) - containing the membrane proton channel, linked together by a central stalk and a peripheral stalk. During catalysis, ATP synthesis in the catalytic domain of F(1) is coupled via a rotary mechanism of the central stalk subunits to proton translocation. Subunits alpha and beta form the catalytic core in F(1). Rotation of the central stalk against the surrounding alpha(3)beta(3) subunits leads to hydrolysis of ATP in three separate catalytic sites on the beta subunits. Subunit alpha does not bear the catalytic high-affinity ATP-binding sites. The polypeptide is ATP synthase subunit alpha, mitochondrial (ATPA) (Pisum sativum (Garden pea)).